The primary structure comprises 578 residues: Protein LIKE EARLY STARVATION, chloroplastic (578 aa).

A chloroplast-targeting transit peptide spans 1-56 (MALRLGVSIGAALGSSHWDDGQRVRQRDFSASVNFTAPVTSRRSLRGSRTGVRILR). Disordered regions lie at residues 146-166 (NNSG…TSEV) and 187-206 (SETS…TPPQ).

Belongs to the ESV1 family. Expressed ubiquitously.

It localises to the plastid. Its subcellular location is the chloroplast stroma. Binds preferentially to highly ordered alpha-glucans, such as starch and crystalline maltodextrins. Involved in the organization of the starch granule matrix, thus influencing starch turnover by modulating the accessibility of starch polymers to modifying and degrading enzymes involved in phosphorylation, hydrolyzes and synthesis, including starch synthases (SSI and SSIII), starch phosphorylases (PHS1), isoamylase, beta-amylase, glucan water dikinase (GWD) and phosphoglucan water dikinase (PWD). This Arabidopsis thaliana (Mouse-ear cress) protein is Protein LIKE EARLY STARVATION, chloroplastic.